The primary structure comprises 117 residues: Replication initiation control protein YabA (117 aa).

The segment at 45 to 81 (NQHLRERLDQSDRDKSSETENDSAQKPGHSDIGEGHD) is disordered. Basic and acidic residues-rich tracts occupy residues 46-62 (QHLRERLDQSDRDKSSE) and 72-81 (GHSDIGEGHD). Residues His-92, Cys-94, Cys-107, and Cys-110 each coordinate Zn(2+).

This sequence belongs to the YabA family. Homotetramer. Interacts with both DnaA and DnaN, acting as a bridge between these two proteins. Requires Zn(2+) as cofactor.

The protein localises to the cytoplasm. It is found in the nucleoid. In terms of biological role, involved in control of chromosome replication initiation. Inhibits the cooperative binding of DnaA to the oriC region, thus negatively regulating initiation of chromosome replication. Inhibits the ability of DnaA-ATP to form a helix on DNA; does not disassemble preformed DnaA-DNA helices. Decreases the residence time of DnaA on the chromosome at its binding sites (oriC, replication forks and promoter-binding sites). Tethers DnaA to the replication machinery via the DNA polymerase beta sliding clamp subunit (dnaN). Associates with oriC and other DnaA targets on the chromosome in a DnaA-dependent manner. In Bacillus pumilus (strain SAFR-032), this protein is Replication initiation control protein YabA.